The chain runs to 501 residues: Cytochrome P450 7A1 (501 aa).

A helical membrane pass occupies residues 4-24 (ISLLGGIVTAVCCCLWLLLGM). Cys-441 is a binding site for heme.

This sequence belongs to the cytochrome P450 family. It depends on heme as a cofactor.

It is found in the endoplasmic reticulum membrane. The protein localises to the microsome membrane. It carries out the reaction cholesterol + reduced [NADPH--hemoprotein reductase] + O2 = 7alpha-hydroxycholesterol + oxidized [NADPH--hemoprotein reductase] + H2O + H(+). It catalyses the reaction 4beta-hydroxycholesterol + reduced [NADPH--hemoprotein reductase] + O2 = 4beta,7alpha-dihydroxycholesterol + oxidized [NADPH--hemoprotein reductase] + H2O + H(+). The catalysed reaction is lathosterol + reduced [NADPH--hemoprotein reductase] + O2 = 7alpha,8alpha-epoxy-5alpha-cholestan-3beta-ol + oxidized [NADPH--hemoprotein reductase] + H2O + H(+). The enzyme catalyses lathosterol + reduced [NADPH--hemoprotein reductase] + O2 = 5alpha-cholestan-7-oxo-3beta-ol + oxidized [NADPH--hemoprotein reductase] + H2O + H(+). It carries out the reaction 7-dehydrocholesterol + reduced [NADPH--hemoprotein reductase] + O2 = 7-oxocholesterol + oxidized [NADPH--hemoprotein reductase] + H2O + H(+). It catalyses the reaction (24S)-hydroxycholesterol + reduced [NADPH--hemoprotein reductase] + O2 = (24S)-7alpha-dihydroxycholesterol + oxidized [NADPH--hemoprotein reductase] + H2O + H(+). The catalysed reaction is (24R)-hydroxycholesterol + reduced [NADPH--hemoprotein reductase] + O2 = (24R)-7alpha-dihydroxycholesterol + oxidized [NADPH--hemoprotein reductase] + H2O + H(+). It participates in lipid metabolism; bile acid biosynthesis. Its pathway is steroid metabolism; cholesterol degradation. In terms of biological role, a cytochrome P450 monooxygenase involved in the metabolism of endogenous cholesterol and its oxygenated derivatives (oxysterols). Mechanistically, uses molecular oxygen inserting one oxygen atom into a substrate, and reducing the second into a water molecule, with two electrons provided by NADPH via cytochrome P450 reductase (CPR; NADPH-ferrihemoprotein reductase). Functions as a critical regulatory enzyme of bile acid biosynthesis and cholesterol homeostasis. Catalyzes the hydroxylation of carbon hydrogen bond at 7-alpha position of cholesterol, a rate-limiting step in cholesterol catabolism and bile acid biosynthesis. 7-alpha hydroxylates several oxysterols, including 4beta-hydroxycholesterol and 24-hydroxycholesterol. Catalyzes the oxidation of the 7,8 double bond of 7-dehydrocholesterol and lathosterol with direct and predominant formation of the 7-keto derivatives. The protein is Cytochrome P450 7A1 (CYP7A1) of Sus scrofa (Pig).